Consider the following 1079-residue polypeptide: Extracellular calcium-sensing receptor (1079 aa).

Residues M1–A19 form the signal peptide. The Extracellular portion of the chain corresponds to Y20–E610. The tract at residues P22 to P188 is ligand-binding 1 (LB1). An intrachain disulfide couples C60 to C101. R66 to W70 serves as a coordination point for phosphate. The Ca(2+) site is built by I81, S84, L87, and L88. N-linked (GlcNAc...) asparagine glycosylation occurs at N90. Ca(2+) is bound at residue T100. N-linked (GlcNAc...) asparagine glycosylation is present at N130. T145 provides a ligand contact to Ca(2+). 3 residues coordinate L-tryptophan: S147, A168, and S170. 5 residues coordinate Ca(2+): S170, P188, D190, E231, and D234. Residues N189–A324 form a ligand-binding 2 (LB2) region. 7 disulfide bridges follow: C236-C561, C358-C395, C437-C449, C542-C562, C546-C565, C568-C582, and C585-C598. The spermine site is built by D238 and S240. N-linked (GlcNAc...) asparagine glycans are attached at residues N261 and N287. E297 serves as a coordination point for Ca(2+). L-tryptophan is bound at residue E297. N-linked (GlcNAc...) asparagine glycosylation is found at N386 and N400. R415 to S417 contacts phosphate. N446, N468, and N488 each carry an N-linked (GlcNAc...) asparagine glycan. Y489 lines the Ca(2+) pocket. An N-linked (GlcNAc...) asparagine glycan is attached at N541. A cysteine-rich (CR) region spans residues C542 to F612. G557 serves as a coordination point for Ca(2+). A glycan (N-linked (GlcNAc...) asparagine) is linked at N594. The chain crosses the membrane as a helical span at residues P611–K636. The Cytoplasmic segment spans residues F637–R648. The segment at F637–R648 is intracellular loop 1 (ICL1). Residues E649–F668 form a helical membrane-spanning segment. Residues I669 to D674 are Extracellular-facing. A helical membrane pass occupies residues W675–K698. Topologically, residues T699 to N722 are cytoplasmic. The intracellular loop 2 (ICL2) stretch occupies residues T699–N722. The helical transmembrane segment at L723–T745 threads the bilayer. The Extracellular segment spans residues A746–S769. Residues L770–F789 form a helical membrane-spanning segment. Over F790–K805 the chain is Cytoplasmic. Residues F790–K805 form an intracellular loop 3 (ICL3) region. A helical transmembrane segment spans residues F806 to T828. Over Y829–F832 the chain is Extracellular. Residues V833–F854 form a helical membrane-spanning segment. Residues N855–S1079 lie on the Cytoplasmic side of the membrane. The C-terminus stretch occupies residues N855–S1079. The interaction with RNF19A stretch occupies residues A880–S900. A Phosphothreonine modification is found at T888. An arginine-rich retention motif region spans residues R890 to R898. Residues S892, S899, and S920 each carry the phosphoserine modification. Residues S892–S918 are compositionally biased toward low complexity. Residues S892–C963 are disordered. The segment covering P945–Q954 has biased composition (pro residues). S1062 is subject to Phosphoserine.

Belongs to the G-protein coupled receptor 3 family. In terms of assembly, homodimer; disulfide-linked. Interacts with VCP. Interacts with ARRB1. In terms of processing, phosphorylation at Thr-888 by PKC impairs coupling with G(q)/G(11) G-proteins, while it does not affect G(i)/G(o)-coupling. Phosphorylation at Ser-892 by PKC and Ser-899 by PKA promote plasma membrane localization. Post-translationally, ubiquitinated by RNF19A; which induces proteasomal degradation.

It is found in the cell membrane. With respect to regulation, in resting state, adopts an open conformation, anion-binding promoting the inactive configuration. Upon aromatic amino acid-binding, the groove in the extracellular venus flytrap module is closed, thereby inducing the formation of a novel homodimer interface between subunits. Calcium ions stabilize the active state by enhancing homodimer interactions between membrane-proximal domains to fully activate the receptor. Upon activation, the homodimer adopts an asymmetric configuration of the 7-transmembrane region that primes one protomer for G-protein coupling. G-protein binding expands the transmembrane dimer interface; the restriction imposed by the receptor dimer, in combination with intracellular loop 2 (ICL2), enables G-protein activation by facilitating conformational transition of G-protein alpha. Coupling to different classes of G-proteins results in distinct CASR-G-protein interfaces. In contrast to human protein, not activated by AMG 416, a D-amino acid-containing peptide agonist: this is probably due to the absence of a Cys residue at position 482, which forms a disulfide bond with the AMG 416 peptide agonist in human and that is replaced by a Tyr residue in pig. Its function is as follows. G-protein-coupled receptor that senses changes in the extracellular concentration of calcium ions and plays a key role in maintaining calcium homeostasis. Senses fluctuations in the circulating calcium concentration: activated by elevated circulating calcium, leading to decreased parathyroid hormone (PTH) secretion in parathyroid glands. In kidneys, acts as a key regulator of renal tubular calcium resorption. Ligand binding causes a conformation change that triggers signaling via guanine nucleotide-binding proteins (G-proteins) and modulates the activity of downstream effectors. CASR is coupled with different G(q)/G(11), G(i)/G(o)- or G(s)-classes of G-proteins depending on the context. In the parathyroid and kidney, CASR signals through G(q)/G(11) and G(i)/G(o) G-proteins: G(q)/G(11) coupling activates phospholipase C-beta, releasing diacylglycerol (DAG) and inositol 1,4,5-trisphosphate (IP3) second messengers, while G(i)/G(o) coupling mediates inhibition of adenylate cyclase activity. The G-protein-coupled receptor activity is activated by a co-agonist mechanism: aromatic amino acids, such as Trp or Phe, act concertedly with divalent cations, such as calcium or magnesium, to achieve full receptor activation. Acts as an activator of the NLRP3 inflammasome via G(i)/G(o)-mediated signaling: down-regulation of cyclic AMP (cAMP) relieving NLRP3 inhibition by cAMP. Acts as a regulator of proton-sensing receptor GPR68 in a seesaw manner: CASR-mediated signaling inhibits GPR68 signaling in response to extracellular calcium, while GPR68 inhibits CASR in presence of extracellular protons. In Sus scrofa (Pig), this protein is Extracellular calcium-sensing receptor (CASR).